Here is a 423-residue protein sequence, read N- to C-terminus: MKEIISRHKAGEQIGICSVCSAHPLVIESALRFDLNSGNKVLIEATSNQVNQFGGYTGMKPADFRDFVYGIAQEVGFPRERLILGGDHLGPNCWQNEPADTAMEKSVELIKAYVAAGFSKIHLDASMSFADDPTPLDPMVVAKRAALLCQAAETTATDEQKRHLTYVIGTEVPVPGGEASAINAVHVTREQDAARTLQTHQAAFRALGLDEALNRVIAIVVQPGVEFDHTQIIHYQPQAAQALSAWIKETPMVYEAHSTDYQTRQAYRALVRDHYAILKVGPALTFALREAIFALAQMENELISPEQRSRVLEVIDEVMLNEPGYWKKYYRPTWSQAMVDIHFSLSDRIRYYWPHPRIRQSVEKLIANLNNVTLPLGLISQFMPVQFERLSEGVLTPTPHNLIIDKIQDVLRAYRFGCTPDVA.

Belongs to the GatZ/KbaZ family. GatZ subfamily. Forms a complex with GatY.

It functions in the pathway carbohydrate metabolism; D-tagatose 6-phosphate degradation; D-glyceraldehyde 3-phosphate and glycerone phosphate from D-tagatose 6-phosphate: step 2/2. In terms of biological role, component of the tagatose-1,6-bisphosphate aldolase GatYZ that is required for full activity and stability of the Y subunit. Could have a chaperone-like function for the proper and stable folding of GatY. When expressed alone, GatZ does not show any aldolase activity. Is involved in the catabolism of galactitol. The chain is D-tagatose-1,6-bisphosphate aldolase subunit GatZ from Salmonella gallinarum (strain 287/91 / NCTC 13346).